Consider the following 590-residue polypeptide: Probable metalloendopeptidase G1-type (590 aa).

H41 lines the Zn(2+) pocket. E44 is an active-site residue. Position 45 (H45) interacts with Zn(2+).

This sequence belongs to the peptidase M44 family. It depends on Zn(2+) as a cofactor.

Seems to be involved in viral proteins maturation by cleavage at Ala-Gly-|-Xaa motifs. This is Probable metalloendopeptidase G1-type (GP045L) from Oryctolagus cuniculus (Rabbit).